Here is a 103-residue protein sequence, read N- to C-terminus: Small ribosomal subunit protein cS23 (103 aa).

The protein belongs to the chloroplast-specific ribosomal protein cS23 family. As to quaternary structure, part of the 30S ribosomal subunit.

Its subcellular location is the plastid. It is found in the chloroplast. Probably a ribosomal protein or a ribosome-associated protein. The sequence is that of Small ribosomal subunit protein cS23 (ycf65) from Euglena granulata.